Here is a 277-residue protein sequence, read N- to C-terminus: Indole-3-glycerol phosphate synthase (277 aa).

This sequence belongs to the TrpC family.

The catalysed reaction is 1-(2-carboxyphenylamino)-1-deoxy-D-ribulose 5-phosphate + H(+) = (1S,2R)-1-C-(indol-3-yl)glycerol 3-phosphate + CO2 + H2O. Its pathway is amino-acid biosynthesis; L-tryptophan biosynthesis; L-tryptophan from chorismate: step 4/5. In Pseudomonas putida (strain W619), this protein is Indole-3-glycerol phosphate synthase.